A 247-amino-acid polypeptide reads, in one-letter code: Probable transcriptional regulatory protein YebC (247 aa).

Residues 1–20 (MAGHSKWANTRHRKAAQDAK) form a disordered region.

It belongs to the TACO1 family.

It localises to the cytoplasm. This Salmonella arizonae (strain ATCC BAA-731 / CDC346-86 / RSK2980) protein is Probable transcriptional regulatory protein YebC.